The sequence spans 360 residues: MRVFNFSAGPAAMPEEVLRQAADEMLDWGGSGMSVMEMSHRGKEFMTIHEEALTDLRELLQVPSSHHILFLQGGGLGENAIVPMNLMGRKARADFVVTGSWSQKSFKEAQKYGTVHLAASGETANGFTHVPARAEWSLSDDPAYVHLCTNETIHGVETFEIPDLGDIPLVADASSHILSRPMDIAKYGVLFGGAQKNIGMAGVTVVIVREDLLERSMSICPSAFEWKTVALNNSMYNTPPTYAIYIAGLVFKWLKKQGGLTAIEARNVEKAKLLYDTIDSSSFYLNKVERNARSRMNVPFFLADESRNEDFLAGAKARGLVQLKGHKSVGGMRASIYNAVPLEGVKALVEYMREFEQRGA.

Position 41 (arginine 41) interacts with L-glutamate. Residues tryptophan 101, threonine 152, aspartate 172, and glutamine 195 each coordinate pyridoxal 5'-phosphate. Lysine 196 carries the post-translational modification N6-(pyridoxal phosphate)lysine. 237-238 (NT) contacts pyridoxal 5'-phosphate.

Belongs to the class-V pyridoxal-phosphate-dependent aminotransferase family. SerC subfamily. In terms of assembly, homodimer. Pyridoxal 5'-phosphate serves as cofactor.

The protein localises to the cytoplasm. The enzyme catalyses O-phospho-L-serine + 2-oxoglutarate = 3-phosphooxypyruvate + L-glutamate. The catalysed reaction is 4-(phosphooxy)-L-threonine + 2-oxoglutarate = (R)-3-hydroxy-2-oxo-4-phosphooxybutanoate + L-glutamate. It functions in the pathway amino-acid biosynthesis; L-serine biosynthesis; L-serine from 3-phospho-D-glycerate: step 2/3. Its pathway is cofactor biosynthesis; pyridoxine 5'-phosphate biosynthesis; pyridoxine 5'-phosphate from D-erythrose 4-phosphate: step 3/5. Functionally, catalyzes the reversible conversion of 3-phosphohydroxypyruvate to phosphoserine and of 3-hydroxy-2-oxo-4-phosphonooxybutanoate to phosphohydroxythreonine. This Paraburkholderia phymatum (strain DSM 17167 / CIP 108236 / LMG 21445 / STM815) (Burkholderia phymatum) protein is Phosphoserine aminotransferase.